The primary structure comprises 455 residues: MHTGCCTTKFDTEVLIIGNGPAGIALSSFLSGMHPFYDATHPHENVTVHEKLLANHDFSLIDQDLSWSSNLTELSQSGRPLSVLYDMLVRPGADMGSDAPGCIQWELNRRREIPHMVIGETKIGGSWNEYDAEMLTVSFSDWMDMPGFTMEQWLGGRPLVKRLPSVAIATYLKKYVERLRLRKKFHQYFVVNSIKKIGDVWVTSGKRSTDGRSFVIRSKQVVVACGKTSPRKLQLPNEEHCSSNIVYDVRALKERLDATKKTVIDEDENYDTPSTSTCSPVIVVGDGVSSVDCVRHCLERDIPVVHVIRRTLRELRNVMLSRLSPIHYSEYTDIYRMMIGRSVHKNYQRVLDASITSVSKIHVEITTGSNREIIEMPYSTVAVCIGRESHFSTVFENAHTFLDYQSEQDETLFAVGAYAGDHFVRFLVGGCLRVAQHITGAANNNNVTAKLLPIC.

This sequence belongs to the OKL38 family. It depends on NADPH as a cofactor.

It localises to the midbody. In terms of biological role, monooxygenase catalytic activity. Involved in regulation of cytokinesis; promotes rho-1/RhoA activity, probably acting locally at the midbody in late cytokinesis. Monooxygenase activity is required to stabilize structures between primordial germ cells (PGCs), termed intercellular bridges. Dispensable for fertility. This Caenorhabditis elegans protein is Oxidative stress induced growth inhibitor homolog osgn-1.